The primary structure comprises 100 residues: Small ribosomal subunit protein uS14c (100 aa).

It belongs to the universal ribosomal protein uS14 family. As to quaternary structure, part of the 30S ribosomal subunit.

The protein resides in the plastid. The protein localises to the chloroplast. In terms of biological role, binds 16S rRNA, required for the assembly of 30S particles. This chain is Small ribosomal subunit protein uS14c, found in Anthoceros angustus (Hornwort).